The chain runs to 232 residues: Aspartate/glutamate leucyltransferase (232 aa).

This sequence belongs to the R-transferase family. Bpt subfamily.

The protein localises to the cytoplasm. It catalyses the reaction N-terminal L-glutamyl-[protein] + L-leucyl-tRNA(Leu) = N-terminal L-leucyl-L-glutamyl-[protein] + tRNA(Leu) + H(+). It carries out the reaction N-terminal L-aspartyl-[protein] + L-leucyl-tRNA(Leu) = N-terminal L-leucyl-L-aspartyl-[protein] + tRNA(Leu) + H(+). In terms of biological role, functions in the N-end rule pathway of protein degradation where it conjugates Leu from its aminoacyl-tRNA to the N-termini of proteins containing an N-terminal aspartate or glutamate. The chain is Aspartate/glutamate leucyltransferase from Vibrio vulnificus (strain YJ016).